Here is a 603-residue protein sequence, read N- to C-terminus: NADH-ubiquinone oxidoreductase chain 5 (603 aa).

Transmembrane regions (helical) follow at residues 4–24, 35–55, 84–104, 121–141, 177–197, 213–233, 241–261, 273–293, 301–320, 325–347, 366–386, 413–433, 457–477, 480–500, and 583–603; these read ISTLTLASLIILTLPITTTLL, ITKTAVTYAFVISLIPTLLFV, FFSLTFMPIALFITWSIMEFS, LLLFLITMLILVSANNLLQLF, IGDMGFIMMMAWFIIHLNSWE, LLGLLLASTGKSAQFGLHPWL, TPVSALLHSSTMVMAGVFTLI, VQTSTLCLGAITTLFTAICAL, IIALSTSSQLGLMMVTIGIN, AFTHMCTHAFFKAMLFLSSGSII, MPITSTAIIIGSLALTGMPFL, LIAVSMTASYSTRIIFFALLG, LILGSIFMGFFISMNTIPHTT, MTMPPHLKFMALAVTLLGFTV, and LMKLYFLSFLLSITLGLLIAL.

The protein belongs to the complex I subunit 5 family. In terms of assembly, core subunit of respiratory chain NADH dehydrogenase (Complex I) which is composed of 45 different subunits.

Its subcellular location is the mitochondrion inner membrane. The catalysed reaction is a ubiquinone + NADH + 5 H(+)(in) = a ubiquinol + NAD(+) + 4 H(+)(out). Functionally, core subunit of the mitochondrial membrane respiratory chain NADH dehydrogenase (Complex I) which catalyzes electron transfer from NADH through the respiratory chain, using ubiquinone as an electron acceptor. Essential for the catalytic activity and assembly of complex I. In Mammuthus primigenius (Siberian woolly mammoth), this protein is NADH-ubiquinone oxidoreductase chain 5 (MT-ND5).